The primary structure comprises 193 residues: MKFFIFTCLLAVVLAKHEMDQGSSSEESINVSQQKFKQVKKVAIHPSKEDICSTFCEEAVRNIKEVESAEVPTENKISQFYQKWKFLQYLQALHQGQIVMNPWDQGKTRAYPFIPTVNTEQLSISEESTEVPTEESTEVFTKKTELTEEEKDHQKFLNKIYQYYQTFLWPEYLKTVYQYQKTMTPWNHIKRYF.

An N-terminal signal peptide occupies residues 1-15 (MKFFIFTCLLAVVLA). Residues Ser23, Ser24, Ser25, Ser28, Ser47, Ser68, Ser123, Ser125, Ser128, and Ser136 each carry the phosphoserine modification.

It belongs to the alpha-casein family. As to expression, mammary gland specific. Secreted in milk.

It localises to the secreted. In terms of biological role, important role in the capacity of milk to transport calcium phosphate. The polypeptide is Alpha-S2-casein (CSN1S2) (Camelus dromedarius (Dromedary)).